The following is a 371-amino-acid chain: Glycosyltransferase 8 domain-containing protein 1 (371 aa).

The Cytoplasmic segment spans residues 1–7; sequence MSFRKVN. A helical; Signal-anchor for type II membrane protein transmembrane segment spans residues 8–28; that stretch reads IIIWVLAVVLFLLVLHHNFLS. Topologically, residues 29–371 are lumenal; the sequence is LSSLLKNDIS…RRHMDTSNIK (343 aa). Residue asparagine 257 is glycosylated (N-linked (GlcNAc...) asparagine).

Belongs to the glycosyltransferase 8 family.

It localises to the membrane. This is Glycosyltransferase 8 domain-containing protein 1 (Glt8d1) from Mus musculus (Mouse).